Here is a 364-residue protein sequence, read N- to C-terminus: Nucleoporin SEH1 (364 aa).

WD repeat units lie at residues 10-49, 55-96, 111-152, 160-210, 217-258, and 275-314; these read DHKD…EWNC, THSG…SNDK, DSRT…NLSQ, SCKL…RKYA, TVTD…KESS, and GHNS…NWKC. Positions 326–364 are disordered; sequence NGAAGQAGTPGAAGTPGGPASQNALQAVAGRKKAQLMPG. Low complexity predominate over residues 327–338; that stretch reads GAAGQAGTPGAA. A compositionally biased stretch (basic residues) spans 355–364; it reads GRKKAQLMPG.

This sequence belongs to the WD repeat SEC13 family. In terms of assembly, component of the Nup107-160 subcomplex of the nuclear pore complex (NPC). The Nup107-160 subcomplex includes NUP160, NUP133, NUP107, NUP98, NUP85, NUP43, NUP37, SEH1 and SEC13. Component of the GATOR2 subcomplex, composed of MIOS, SEC13, SEH1L, WDR24 and WDR59. The GATOR2 complex interacts with CASTOR1 and CASTOR2; the interaction is negatively regulated by arginine. The GATOR2 complex interacts with SESN1, SESN2 and SESN3; the interaction is negatively regulated by amino acids.

The protein localises to the chromosome. The protein resides in the centromere. It localises to the kinetochore. It is found in the nucleus. Its subcellular location is the nuclear pore complex. The protein localises to the lysosome membrane. Its activity is regulated as follows. The GATOR2 complex is negatively regulated by the upstream amino acid sensors CASTOR1 and SESN2, which sequester the GATOR2 complex in absence of amino acids. In the presence of abundant amino acids, GATOR2 is released from CASTOR1 and SESN2 and activated. Functionally, component of the Nup107-160 subcomplex of the nuclear pore complex (NPC). The Nup107-160 subcomplex is required for the assembly of a functional NPC. The Nup107-160 subcomplex is also required for normal kinetochore microtubule attachment, mitotic progression and chromosome segregation. This subunit plays a role in recruitment of the Nup107-160 subcomplex to the kinetochore. As a component of the GATOR2 complex, functions as an activator of the amino acid-sensing branch of the mTORC1 signaling pathway. The GATOR2 complex indirectly activates mTORC1 through the inhibition of the GATOR1 subcomplex. GATOR2 probably acts as an E3 ubiquitin-protein ligase toward GATOR1. In the presence of abundant amino acids, the GATOR2 complex mediates ubiquitination of the NPRL2 core component of the GATOR1 complex, leading to GATOR1 inactivation. In the absence of amino acids, GATOR2 is inhibited, activating the GATOR1 complex. The protein is Nucleoporin SEH1 (seh1l) of Osmerus mordax (Rainbow smelt).